The primary structure comprises 210 residues: Ribosomal RNA small subunit methyltransferase G (210 aa).

S-adenosyl-L-methionine contacts are provided by residues Gly-74, Phe-79, 127–128 (IE), and Arg-143.

The protein belongs to the methyltransferase superfamily. RNA methyltransferase RsmG family.

The protein resides in the cytoplasm. The enzyme catalyses guanosine(527) in 16S rRNA + S-adenosyl-L-methionine = N(7)-methylguanosine(527) in 16S rRNA + S-adenosyl-L-homocysteine. In terms of biological role, specifically methylates the N7 position of guanine in position 527 of 16S rRNA. In Chelativorans sp. (strain BNC1), this protein is Ribosomal RNA small subunit methyltransferase G.